The following is a 200-amino-acid chain: Glycerol-3-phosphate acyltransferase (200 aa).

4 helical membrane passes run 4-24, 70-90, 110-130, and 158-178; these read ALLA…YWVG, ALGS…FAVI, LGIL…VWLL, and QPLP…GAHR.

Belongs to the PlsY family. Probably interacts with PlsX.

The protein resides in the cell inner membrane. The catalysed reaction is an acyl phosphate + sn-glycerol 3-phosphate = a 1-acyl-sn-glycero-3-phosphate + phosphate. It participates in lipid metabolism; phospholipid metabolism. Catalyzes the transfer of an acyl group from acyl-phosphate (acyl-PO(4)) to glycerol-3-phosphate (G3P) to form lysophosphatidic acid (LPA). This enzyme utilizes acyl-phosphate as fatty acyl donor, but not acyl-CoA or acyl-ACP. The sequence is that of Glycerol-3-phosphate acyltransferase from Synechococcus sp. (strain JA-2-3B'a(2-13)) (Cyanobacteria bacterium Yellowstone B-Prime).